Consider the following 418-residue polypeptide: Putative ion-transport protein YfeO (418 aa).

12 consecutive transmembrane segments (helical) span residues 10-30, 54-74, 99-119, 120-140, 149-169, 186-206, 223-243, 258-278, 300-320, 322-342, 343-363, and 371-391; these read LLLS…LIVV, DSPI…GLVI, ALPG…SLGP, EHPI…RLLP, ILAS…AALI, LFAP…FFHP, ILSG…AVWC, VLVL…GGPV, DYFL…ASGF, GGRI…LHEH, VPAV…VLVV, and LFMA…CIVM.

It belongs to the chloride channel (TC 2.A.49) family.

Its subcellular location is the cell membrane. This is Putative ion-transport protein YfeO from Shigella sonnei (strain Ss046).